The primary structure comprises 76 residues: Putative membrane protein insertion efficiency factor (76 aa).

It belongs to the UPF0161 family.

It localises to the cell inner membrane. In terms of biological role, could be involved in insertion of integral membrane proteins into the membrane. In Porphyromonas gingivalis (strain ATCC 33277 / DSM 20709 / CIP 103683 / JCM 12257 / NCTC 11834 / 2561), this protein is Putative membrane protein insertion efficiency factor.